The sequence spans 220 residues: Heptaprenyl diphosphate synthase component 1 (220 aa).

Heterodimer of component I and II.

The catalysed reaction is 4 isopentenyl diphosphate + (2E,6E)-farnesyl diphosphate = all-trans-heptaprenyl diphosphate + 4 diphosphate. Functionally, supplies heptaprenyl diphosphate, the precursor for the side chain of the isoprenoid quinone menaquinone-7 (MQ-7). This chain is Heptaprenyl diphosphate synthase component 1 (hepS), found in Geobacillus stearothermophilus (Bacillus stearothermophilus).